We begin with the raw amino-acid sequence, 463 residues long: MISAISSPWLTQLSHFCDVAAFTANSLSSLNATGGYHLSPSPGDPYSQHEPHYEPCSASQHSYSFGHACPEPESGASSSSCASSTPGSGSTGSSSSNKAPVKKNPKVANINVQLEMKALWDEFNQLGTEMIVTKAGRRMFPTFQVKIFGMDPMADYMLLMDFVPVDDKRYRYAFHSSSWLVAGKADPATPGRVHYHPDSPAKGAQWMKQIVSFDKLKLTNNLLDDNGHIILNSMHRYQPRFHVVYVDPRKDSEKYAEENFKTFVFEETRFTAVTAYQNHRITQLKIASNPFAKGFRDCDPEDWPRNHRPGSLPLMNAFARSRNPVSSPTQNGSDKDGDGRREYERDASGTPLHGDAAHQQLMSRVLSLSLPVPGGLVPLSTGRPSPPHELRLDPHSQGSEPLHHHPYKYPTSYDRYLGAKTRPAPYPLPTIRGHGYHHHHMNPAAANMYSGAGAPGSYEYGPR.

Disordered stretches follow at residues S39–A58 and G75–N104. The segment covering G75–S96 has biased composition (low complexity). Residues L119 to D297 constitute a DNA-binding region (T-box). Disordered regions lie at residues R320–G354 and V377–Y409. Residues N323–G332 are compositionally biased toward polar residues. Basic and acidic residues predominate over residues S333–A347. Positions K420–I431 match the Nuclear localization signal motif.

Binds DNA as a dimer. Interacts with dscr6/ripply3.

It localises to the nucleus. Probable transcriptional regulator involved in developmental processes. Binds to the palindromic T site 5'-TTCACACCTAGGTGTGAA-3' DNA sequence. Induces pre-placodal ectoderm (PPE) gene expression in regions where RIPPLY3 is absent. Plays a role in the formation of the anteroposterior (AP) axis during embryonic development; required to establish the posterolateral border of the pre-placodal ectoderm (PPE) acting downstream of the retinoic acid receptor (RAR) signaling. The chain is T-box transcription factor TBX1-A (tbx1-a) from Xenopus laevis (African clawed frog).